The primary structure comprises 336 residues: Ventral anterior homeobox 1 (336 aa).

Over residues 1–34 (MFGKTDKMDVRCHSDTEAARVSKNAHKESREIKG) the composition is skewed to basic and acidic residues. Disordered stretches follow at residues 1–39 (MFGKTDKMDVRCHSDTEAARVSKNAHKESREIKGAEGSL) and 50–69 (AFSASGASEDCNKSKSNSSA). The segment at residues 100-159 (PKRTRTSFTAEQLYRLEMEFQRCQYVVGRERTELARQLNLSETQVKVWFQNRRTKQKKDQ) is a DNA-binding region (homeobox). The segment covering 236 to 250 (PGPAGAASQHPPAVG) has biased composition (low complexity). 2 disordered regions span residues 236–267 (PGPAGAASQHPPAVGGAPGPGPAGPGGLHAGA) and 316–336 (SAFEPYSRTNNKEGAEKKALD). The span at 325-336 (NNKEGAEKKALD) shows a compositional bias: basic and acidic residues.

It belongs to the EMX homeobox family.

Its subcellular location is the nucleus. Functionally, transcription factor that may function in dorsoventral specification of the forebrain. Required for axon guidance and major tract formation in the developing forebrain. May contribute to the differentiation of the neuroretina, pigmented epithelium and optic stalk. The chain is Ventral anterior homeobox 1 (Vax1) from Rattus norvegicus (Rat).